We begin with the raw amino-acid sequence, 153 residues long: Transcriptional repressor NrdR (153 aa).

The segment at 3 to 34 (CPYCGHPDTRVVDSRPSDEGMAIRRRRECPSC) is a zinc-finger region. Residues 49 to 136 (LMVVKRDGRK…VYREFDSVER (88 aa)) form the ATP-cone domain.

Belongs to the NrdR family. Requires Zn(2+) as cofactor.

Negatively regulates transcription of bacterial ribonucleotide reductase nrd genes and operons by binding to NrdR-boxes. The polypeptide is Transcriptional repressor NrdR (Thermus thermophilus (strain ATCC BAA-163 / DSM 7039 / HB27)).